Here is a 127-residue protein sequence, read N- to C-terminus: KP4 killer toxin (127 aa).

The N-terminal stretch at 1 to 22 is a signal peptide; the sequence is MQIINVVYSFLFAAAMLPVVHS. 5 disulfide bridges follow: Cys27-Cys100, Cys33-Cys103, Cys49-Cys89, Cys57-Cys82, and Cys66-Cys127.

Monomer.

The protein localises to the secreted. Functionally, this protein is lethal to sensitive cells of the same or related species. It specifically inhibits voltage-gated calcium channels. It inhibits cell growth and division by blocking calcium import. The sequence is that of KP4 killer toxin (M2A) from Mycosarcoma maydis (Corn smut fungus).